The chain runs to 357 residues: Aurora kinase A- and ninein-interacting protein (357 aa).

Polar residues predominate over residues 71–91; it reads LQPGKTNGSDQKSVSSHTESQ. A disordered region spans residues 71–98; the sequence is LQPGKTNGSDQKSVSSHTESQINKESKK. Residues 187 to 357 are interaction with AURKA; the sequence is RKEEKGDSAR…EGNQVIRHQF (171 aa). Serine 267 and serine 292 each carry phosphoserine. Positions 281–357 are interaction with RBBP8/CtIP; the sequence is KDSWSQLFTE…EGNQVIRHQF (77 aa).

The protein belongs to the AUNIP family. In terms of assembly, interacts (via C-terminus) with AURKA (via C-terminus). Interacts (via N-terminus) with NIN; this interaction blocks NIN phosphorylation by both AURKA and GSK3B. Identified in a complex with NIN and AURKA. Interacts with RBBP8/CtIP. Expressed in heart, skeletal muscles, placenta and testis.

The protein resides in the nucleus. It localises to the chromosome. The protein localises to the cytoplasm. Its subcellular location is the cytoskeleton. It is found in the microtubule organizing center. The protein resides in the centrosome. It localises to the spindle pole. DNA-binding protein that accumulates at DNA double-strand breaks (DSBs) following DNA damage and promotes DNA resection and homologous recombination. Serves as a sensor of DNA damage: binds DNA with a strong preference for DNA substrates that mimic structures generated at stalled replication forks, and anchors RBBP8/CtIP to DSB sites to promote DNA end resection and ensuing homologous recombination repair. Inhibits non-homologous end joining (NHEJ). Required for the dynamic movement of AURKA at the centrosomes and spindle apparatus during the cell cycle. This is Aurora kinase A- and ninein-interacting protein from Homo sapiens (Human).